The sequence spans 134 residues: UPF0412 protein YaaI (134 aa).

The first 23 residues, 1 to 23 (MKSVFTLSASLAISLLLCCTAQA), serve as a signal peptide directing secretion.

The protein belongs to the UPF0412 family.

In Escherichia coli O7:K1 (strain IAI39 / ExPEC), this protein is UPF0412 protein YaaI.